Consider the following 182-residue polypeptide: Bifunctional protein PyrR (182 aa).

The PRPP-binding motif lies at 99 to 111; the sequence is VILVDDVLYTGRT.

The protein belongs to the purine/pyrimidine phosphoribosyltransferase family. PyrR subfamily. Homodimer and homohexamer; in equilibrium.

The enzyme catalyses UMP + diphosphate = 5-phospho-alpha-D-ribose 1-diphosphate + uracil. Regulates transcriptional attenuation of the pyrimidine nucleotide (pyr) operon by binding in a uridine-dependent manner to specific sites on pyr mRNA. This disrupts an antiterminator hairpin in the RNA and favors formation of a downstream transcription terminator, leading to a reduced expression of downstream genes. Its function is as follows. Also displays a weak uracil phosphoribosyltransferase activity which is not physiologically significant. In Alkaliphilus metalliredigens (strain QYMF), this protein is Bifunctional protein PyrR.